A 505-amino-acid chain; its full sequence is MFS efflux pump atnC (505 aa).

12 consecutive transmembrane segments (helical) span residues 48–68 (VLQV…GLTV), 117–137 (LIGW…IPYG), 148–168 (VLLL…LVCW), 181–201 (LFQC…ATIA), 216–236 (LQAT…VLMA), 240–260 (WTPC…LIAL), 304–324 (VAGL…LDFL), 343–363 (LSLR…LLLF), 377–399 (LLIA…LSPT), 403–425 (AILV…ASLW), 439–459 (TVAI…SLMY), and 469–489 (WVGL…GVLL).

The protein belongs to the major facilitator superfamily.

Its subcellular location is the membrane. Its pathway is secondary metabolite biosynthesis. Its function is as follows. MFS efflux pump; part of the gene cluster that mediates the biosynthesis of aspercryptins, linear lipopeptides built from six amino acids including 2 highly unusual and nonproteogenic amino acids, 2-amino-octanoic acid (2aoa) and 2-amino-dodecanol (2adol). In Emericella nidulans (strain FGSC A4 / ATCC 38163 / CBS 112.46 / NRRL 194 / M139) (Aspergillus nidulans), this protein is MFS efflux pump atnC.